A 142-amino-acid polypeptide reads, in one-letter code: Probable inactive dual specificity protein phosphatase-like At4g18593 (142 aa).

It belongs to the protein-tyrosine phosphatase family. Non-receptor class dual specificity subfamily.

This Arabidopsis thaliana (Mouse-ear cress) protein is Probable inactive dual specificity protein phosphatase-like At4g18593.